A 304-amino-acid chain; its full sequence is Methionyl-tRNA formyltransferase (304 aa).

Residue 110–113 (SLLP) coordinates (6S)-5,6,7,8-tetrahydrofolate.

It belongs to the Fmt family.

It catalyses the reaction L-methionyl-tRNA(fMet) + (6R)-10-formyltetrahydrofolate = N-formyl-L-methionyl-tRNA(fMet) + (6S)-5,6,7,8-tetrahydrofolate + H(+). Attaches a formyl group to the free amino group of methionyl-tRNA(fMet). The formyl group appears to play a dual role in the initiator identity of N-formylmethionyl-tRNA by promoting its recognition by IF2 and preventing the misappropriation of this tRNA by the elongation apparatus. In Sulfurovum sp. (strain NBC37-1), this protein is Methionyl-tRNA formyltransferase.